The chain runs to 283 residues: Peflin (283 aa).

Tandem repeats lie at residues 21–30 (PQTNYYGGQQ), 36–44 (QPAASYGRP), 45–54 (APGAPYGSPP), 55–62 (SGGVYGHP), 71–79 (APGGPYGGQ), 80–87 (APGGPYSV), 88–95 (PGSTPYGS), and 96–104 (QQHGSYGQG). Residues 21 to 104 (PQTNYYGGQQ…SQQHGSYGQG (84 aa)) are 8 X 9 AA approximate tandem repeat of [AP]-P-G-G-P-Y-G-G-P-P. Residues 37–70 (PAASYGRPAPGAPYGSPPSGGVYGHPVPGSAAPG) show a composition bias toward low complexity. The segment at 37–113 (PAASYGRPAP…GAPAGNIPPG (77 aa)) is disordered. The segment covering 71–81 (APGGPYGGQAP) has biased composition (gly residues). Residues 93–104 (YGSQQHGSYGQG) show a composition bias toward low complexity. EF-hand domains are found at residues 113-148 (GVDP…TNWS), 154-179 (TCTM…SALW), 180-215 (RFIQ…MGYQ), 216-252 (LSPQ…LQSM), and 253-282 (TEAF…TTRL). Asp126, Asp128, Ser130, Tyr132, and Glu137 together coordinate Ca(2+). Ca(2+) is bound by residues Asp193, Asp195, Ser197, Ser199, and Glu204.

In terms of assembly, heterodimer; heterodimerizes (via the EF-hand 5) with pdcd6.

The protein localises to the cytoplasm. Its subcellular location is the endoplasmic reticulum. It is found in the membrane. It localises to the cytoplasmic vesicle. The protein resides in the COPII-coated vesicle membrane. In terms of biological role, calcium-binding protein that acts as an adapter that bridges unrelated proteins or stabilizes weak protein-protein complexes in response to calcium. Acts as a negative regulator of ER-Golgi transport. This is Peflin from Xenopus laevis (African clawed frog).